Here is a 351-residue protein sequence, read N- to C-terminus: Histidinol-phosphate aminotransferase (351 aa).

An N6-(pyridoxal phosphate)lysine modification is found at Lys-213.

This sequence belongs to the class-II pyridoxal-phosphate-dependent aminotransferase family. Histidinol-phosphate aminotransferase subfamily. In terms of assembly, homodimer. It depends on pyridoxal 5'-phosphate as a cofactor.

It carries out the reaction L-histidinol phosphate + 2-oxoglutarate = 3-(imidazol-4-yl)-2-oxopropyl phosphate + L-glutamate. It participates in amino-acid biosynthesis; L-histidine biosynthesis; L-histidine from 5-phospho-alpha-D-ribose 1-diphosphate: step 7/9. This Thermoanaerobacter pseudethanolicus (strain ATCC 33223 / 39E) (Clostridium thermohydrosulfuricum) protein is Histidinol-phosphate aminotransferase.